A 502-amino-acid polypeptide reads, in one-letter code: Glycerol kinase (502 aa).

Thr13 is an ADP binding site. ATP contacts are provided by Thr13, Thr14, and Ser15. A sn-glycerol 3-phosphate-binding site is contributed by Thr13. ADP is bound at residue Arg17. Sn-glycerol 3-phosphate-binding residues include Arg83, Glu84, Tyr136, and Asp246. Glycerol contacts are provided by Arg83, Glu84, Tyr136, Asp246, and Gln247. ADP-binding residues include Thr268 and Gly311. ATP contacts are provided by Thr268, Gly311, Gln315, and Gly412. Positions 412 and 416 each coordinate ADP.

Belongs to the FGGY kinase family.

It carries out the reaction glycerol + ATP = sn-glycerol 3-phosphate + ADP + H(+). The protein operates within polyol metabolism; glycerol degradation via glycerol kinase pathway; sn-glycerol 3-phosphate from glycerol: step 1/1. Inhibited by fructose 1,6-bisphosphate (FBP). Key enzyme in the regulation of glycerol uptake and metabolism. Catalyzes the phosphorylation of glycerol to yield sn-glycerol 3-phosphate. The sequence is that of Glycerol kinase from Francisella tularensis subsp. mediasiatica (strain FSC147).